Consider the following 273-residue polypeptide: Octanoyltransferase (273 aa).

One can recognise a BPL/LPL catalytic domain in the interval D35–E254. Residues R73–H80, A184–G186, and G197–A199 each bind substrate. Residue C215 is the Acyl-thioester intermediate of the active site.

This sequence belongs to the LipB family.

The protein resides in the cytoplasm. The enzyme catalyses octanoyl-[ACP] + L-lysyl-[protein] = N(6)-octanoyl-L-lysyl-[protein] + holo-[ACP] + H(+). It functions in the pathway protein modification; protein lipoylation via endogenous pathway; protein N(6)-(lipoyl)lysine from octanoyl-[acyl-carrier-protein]: step 1/2. Catalyzes the transfer of endogenously produced octanoic acid from octanoyl-acyl-carrier-protein onto the lipoyl domains of lipoate-dependent enzymes. Lipoyl-ACP can also act as a substrate although octanoyl-ACP is likely to be the physiological substrate. The sequence is that of Octanoyltransferase from Streptomyces griseus subsp. griseus (strain JCM 4626 / CBS 651.72 / NBRC 13350 / KCC S-0626 / ISP 5235).